Here is a 20-residue protein sequence, read N- to C-terminus: Calreticulin (20 aa).

Belongs to the calreticulin family. Post-translationally, glycosylated.

It is found in the endoplasmic reticulum lumen. Molecular calcium-binding chaperone promoting folding, oligomeric assembly and quality control in the ER via the calreticulin/calnexin cycle. This lectin may interact transiently with almost all of the monoglucosylated glycoproteins that are synthesized in the ER. This chain is Calreticulin, found in Spinacia oleracea (Spinach).